A 1264-amino-acid chain; its full sequence is Regulator of G-protein signaling 22 (1264 aa).

Residues Glu-565–Gln-587 are disordered. The span at Ser-568 to Lys-578 shows a compositional bias: polar residues. 2 RGS domains span residues Lys-852–Gln-980 and Ala-1021–Asn-1145. Residues Thr-1142–Asp-1174 are a coiled coil.

In terms of assembly, interacts with GNA11, GNA12 and GNA13. In terms of tissue distribution, testis-specific. Expressed in Leydig cells and spermatogenic cells from the spermatogonia to spermatid stages (at protein level).

The protein resides in the cytoplasm. It localises to the nucleus. Its function is as follows. Inhibits signal transduction by increasing the GTPase activity of G protein alpha subunits thereby driving them into their inactive GDP-bound form. This Homo sapiens (Human) protein is Regulator of G-protein signaling 22 (RGS22).